A 370-amino-acid polypeptide reads, in one-letter code: 3-dehydroquinate synthase (370 aa).

NAD(+) contacts are provided by residues D70 to K75, G104 to D108, T128 to T129, K141, K150, and T168 to T171. The Zn(2+) site is built by E183, H246, and H262.

It belongs to the sugar phosphate cyclases superfamily. Dehydroquinate synthase family. Co(2+) serves as cofactor. Zn(2+) is required as a cofactor. It depends on NAD(+) as a cofactor.

It is found in the cytoplasm. It carries out the reaction 7-phospho-2-dehydro-3-deoxy-D-arabino-heptonate = 3-dehydroquinate + phosphate. The protein operates within metabolic intermediate biosynthesis; chorismate biosynthesis; chorismate from D-erythrose 4-phosphate and phosphoenolpyruvate: step 2/7. In terms of biological role, catalyzes the conversion of 3-deoxy-D-arabino-heptulosonate 7-phosphate (DAHP) to dehydroquinate (DHQ). This Rhodococcus opacus (strain B4) protein is 3-dehydroquinate synthase.